We begin with the raw amino-acid sequence, 2997 residues long: Chromodomain-helicase-DNA-binding protein 7 (2997 aa).

A disordered region spans residues 86–144 (PNRMMSNTPGNGLASPHSQYHTPPVPQVPHGGSGGGQMGVYPGMQNERHGQSFVDSSSM). Polar residues predominate over residues 88–106 (RMMSNTPGNGLASPHSQYH). An Omega-N-methylarginine modification is found at Arg148. 5 disordered regions span residues 160–186 (YQQQ…PQHM), 199–287 (SMQQ…AVRP), 375–419 (QMNT…GSAG), 498–816 (GQQH…KQKE), and 938–959 (REPE…SESS). The span at 166 to 177 (QPQPPQPAPSGP) shows a compositional bias: pro residues. 2 stretches are compositionally biased toward polar residues: residues 199–224 (SMQQ…NQGN) and 238–255 (VPQQ…SVQQ). Arg286 carries the asymmetric dimethylarginine modification. Positions 375 to 390 (QMNTQTMHPSQPQGTY) are enriched in polar residues. The segment covering 498–510 (GQQHPGQQPSFQQ) has biased composition (low complexity). A compositionally biased stretch (basic and acidic residues) spans 607–620 (VAEDPSKGFGKDDF). Polar residues predominate over residues 627–636 (QELNRNSLDG). Phosphoserine is present on Ser637. Basic and acidic residues-rich tracts occupy residues 650–682 (KKDP…EPKE) and 717–729 (GKTE…DLDK). Ser725 carries the phosphoserine modification. Positions 746–758 (QKRRSSRQVKRKR) are enriched in basic residues. Over residues 759–769 (YTEDLEFKISD) the composition is skewed to basic and acidic residues. The segment covering 782–794 (SPSNTSQSEQQES) has biased composition (polar residues). Chromo domains lie at 800-867 (PVVE…GQNK) and 882-947 (VEVD…RVER). Positions 980-1154 (LFNWYNMRNC…FSLLHFLEPS (175 aa)) constitute a Helicase ATP-binding domain. Position 993–1000 (993–1000 (DEMGLGKT)) interacts with ATP. The DEAH box motif lies at 1105–1108 (DEAH). The Helicase C-terminal domain maps to 1294 to 1464 (LIDKLLPKLK…LSKKEIEDLL (171 aa)). Disordered stretches follow at residues 1576–1600 (FSDL…KSQG) and 1837–1863 (DMLA…TRTP). Phosphoserine occurs at positions 1577 and 1581. Over residues 1584-1596 (EEKPCAKPRRPQD) the composition is skewed to basic and acidic residues. The span at 1844–1855 (DGGEFDREDEDP) shows a compositional bias: acidic residues. Ser1874 is modified (phosphoserine). Composition is skewed to basic and acidic residues over residues 2170-2189 (QAEG…KCEG) and 2198-2207 (GSGKESKQEC). Positions 2170–2290 (QAEGKVEEPE…DETRDGFYME (121 aa)) are disordered. Phosphoserine is present on residues Ser2231, Ser2233, Ser2237, Ser2251, Ser2272, Ser2275, Ser2356, and Ser2395. Residues 2237–2251 (SEEDEEEKLEDDDKS) are compositionally biased toward acidic residues. The stretch at 2401 to 2431 (RRRRRKIEIEAERAAKRRNLMEMVAQLRESQ) forms a coiled coil. At Thr2472 the chain carries Phosphothreonine. Residues Ser2533 and Ser2535 each carry the phosphoserine modification. Phosphothreonine is present on Thr2551. Residues Ser2559 and Ser2619 each carry the phosphoserine modification. The span at 2823–2832 (ATGNTTTASS) shows a compositional bias: low complexity. Disordered regions lie at residues 2823–2872 (ATGN…SANG) and 2935–2997 (EEKA…ENDE). 2 stretches are compositionally biased toward basic and acidic residues: residues 2839-2849 (STSKGEEKGNE) and 2935-2951 (EEKA…KDGE). Phosphoserine occurs at positions 2956 and 2961. Acidic residues predominate over residues 2970–2997 (LLEDEIAQGEELDSLDGGDEIENNENDE).

It belongs to the SNF2/RAD54 helicase family. In terms of assembly, may interact with CTCF. Interacts with CHD8. Interacts with FAM124B. Found in a complex composed of AGO2, CHD7 and ARB2A. Interacts with TLK2. As to expression, widely expressed in fetal and adult tissues.

The protein resides in the nucleus. The protein localises to the nucleolus. The enzyme catalyses ATP + H2O = ADP + phosphate + H(+). Functionally, ATP-dependent chromatin-remodeling factor, slides nucleosomes along DNA; nucleosome sliding requires ATP. Probable transcription regulator. May be involved in the in 45S precursor rRNA production. The chain is Chromodomain-helicase-DNA-binding protein 7 (CHD7) from Homo sapiens (Human).